The following is a 242-amino-acid chain: Purine nucleoside phosphorylase SCO2081 (242 aa).

Zn(2+)-binding residues include His68, Cys106, and His123.

This sequence belongs to the purine nucleoside phosphorylase YfiH/LACC1 family. As to quaternary structure, homodimer. The cofactor is Cu(2+). Requires Zn(2+) as cofactor.

It carries out the reaction adenosine + phosphate = alpha-D-ribose 1-phosphate + adenine. It catalyses the reaction S-methyl-5'-thioadenosine + phosphate = 5-(methylsulfanyl)-alpha-D-ribose 1-phosphate + adenine. The catalysed reaction is inosine + phosphate = alpha-D-ribose 1-phosphate + hypoxanthine. The enzyme catalyses adenosine + H2O + H(+) = inosine + NH4(+). Functionally, purine nucleoside enzyme that catalyzes the phosphorolysis of adenosine and inosine nucleosides, yielding D-ribose 1-phosphate and the respective free bases, adenine and hypoxanthine. Also catalyzes the phosphorolysis of S-methyl-5'-thioadenosine into adenine and S-methyl-5-thio-alpha-D-ribose 1-phosphate. Also has adenosine deaminase activity. This Streptomyces coelicolor (strain ATCC BAA-471 / A3(2) / M145) protein is Purine nucleoside phosphorylase SCO2081.